A 178-amino-acid polypeptide reads, in one-letter code: Caveolin-1 (178 aa).

S2 is subject to N-acetylserine. At S2 the chain carries Phosphoserine. The required for homooligomerization stretch occupies residues 2–94 (SGGKYVDSEG…WKASFTTFTV (93 aa)). Over 2-104 (SGGKYVDSEG…TKYWFYRLLS (103 aa)) the chain is Cytoplasmic. K5 is modified (N6-acetyllysine; alternate). Residue K5 forms a Glycyl lysine isopeptide (Lys-Gly) (interchain with G-Cter in ubiquitin); alternate linkage. At Y6 the chain carries Phosphotyrosine. At S9 the chain carries Phosphoserine. Position 14 is a phosphotyrosine; by ABL1 (Y14). Y25 carries the post-translational modification Phosphotyrosine. Glycyl lysine isopeptide (Lys-Gly) (interchain with G-Cter in ubiquitin) cross-links involve residues K26, K30, K39, K47, and K57. The segment at 82 to 94 (DGIWKASFTTFTV) is interaction with CAVIN3. The segment at residues 105–125 (ALFGIPMALIWGIYFAILSFL) is an intramembrane region (helical). The Cytoplasmic portion of the chain corresponds to 126 to 178 (HIWAVVPCIKSFLIEIQCISRVYSIYVHTFCDPLFEAIGKIFSNIRINTQKEI). An interacts with SPRY1, SPRY2, SPRY3 and SPRY4 region spans residues 131–142 (VPCIKSFLIEIQ). S-palmitoyl cysteine attachment occurs at residues C133, C143, and C156. The tract at residues 149–160 (SIYVHTFCDPLF) is interacts with SPRY1, SPRY2, and SPRY4. Positions 167-178 (FSNIRINTQKEI) are interacts with SPRY1, SPRY2, SPRY3 and SPRY4.

This sequence belongs to the caveolin family. In terms of assembly, homooligomer. Interacts with GLIPR2. Interacts with NOSTRIN. Interacts with SNAP25 and STX1A. Interacts (via the N-terminus) with DPP4; the interaction is direct. Interacts with CTNNB1, CDH1 and JUP. Interacts with PACSIN2; this interaction induces membrane tubulation. Interacts with SLC7A9. Interacts with BMX and BTK. Interacts with TGFBR1. Interacts with CAVIN3 (via leucine-zipper domain) in a cholesterol-sensitive manner. Interacts with CAVIN1. Interacts with EHD2 in a cholesterol-dependent manner. Forms a ternary complex with UBXN6 and VCP; mediates CAV1 targeting to lysosomes for degradation. Interacts with ABCG1; this interaction regulates ABCG1-mediated cholesterol efflux. Interacts with NEU3; this interaction enhances NEU3 sialidase activity within caveola. Interacts (via C-terminus) with SPRY1, SPRY2 (via C-terminus), SPRY3, and SPRY4. Interacts with IGFBP5; this interaction allows trafficking of IGFBP5 from the plasma membrane to the nucleus. Post-translationally, phosphorylated at Tyr-14 by ABL1 in response to oxidative stress. Ubiquitinated. Undergo monoubiquitination and multi- and/or polyubiquitination. Monoubiquitination of N-terminal lysines promotes integration in a ternary complex with UBXN6 and VCP which promotes oligomeric CAV1 targeting to lysosomes for degradation. Ubiquitinated by ZNRF1; leading to degradation and modulation of the TLR4-mediated immune response.

The protein localises to the golgi apparatus membrane. The protein resides in the cell membrane. It is found in the membrane. Its subcellular location is the caveola. It localises to the membrane raft. Its function is as follows. May act as a scaffolding protein within caveolar membranes. Forms a stable heterooligomeric complex with CAV2 that targets to lipid rafts and drives caveolae formation. Mediates the recruitment of CAVIN proteins (CAVIN1/2/3/4) to the caveolae. Interacts directly with G-protein alpha subunits and can functionally regulate their activity. Involved in the costimulatory signal essential for T-cell receptor (TCR)-mediated T-cell activation. Its binding to DPP4 induces T-cell proliferation and NF-kappa-B activation in a T-cell receptor/CD3-dependent manner. Recruits CTNNB1 to caveolar membranes and may regulate CTNNB1-mediated signaling through the Wnt pathway. Negatively regulates TGFB1-mediated activation of SMAD2/3 by mediating the internalization of TGFBR1 from membrane rafts leading to its subsequent degradation. Binds 20(S)-hydroxycholesterol (20(S)-OHC). This chain is Caveolin-1 (CAV1), found in Bos taurus (Bovine).